Here is a 236-residue protein sequence, read N- to C-terminus: RNA-binding protein 24 (236 aa).

Residues 11 to 88 enclose the RRM domain; it reads TKIFVGGLPY…RKANVNLAYL (78 aa). Positions 175 to 199 are necessary for interaction with EIF4E; the sequence is QYPYAASPAAAGYVTTGGYSYAVQQ.

As to quaternary structure, interacts with EIF4E; this interaction prevents EIF4E from binding to p53/TP53 mRNA and inhibits the assembly of translation initiation complex. In terms of tissue distribution, expressed strongly in heart and skeletal muscles. Weakly expressed in intestine, aorta, liver, lung, kidney, uterus and bladder.

It localises to the nucleus. The protein localises to the cytoplasm. Its function is as follows. Multifunctional RNA-binding protein involved in the regulation of pre-mRNA splicing, mRNA stability and mRNA translation important for cell fate decision and differentiation. Plays a major role in pre-mRNA alternative splicing regulation. Mediates preferentially muscle-specific exon inclusion in numerous mRNAs important for striated cardiac and skeletal muscle cell differentiation. Binds to intronic splicing enhancer (ISE) composed of stretches of GU-rich motifs localized in flanking intron of exon that will be included by alternative splicing. Involved in embryonic stem cell (ESC) transition to cardiac cell differentiation by promoting pre-mRNA alternative splicing events of several pluripotency and/or differentiation genes. Plays a role in the regulation of mRNA stability. Binds to 3'-untranslated region (UTR) AU-rich elements in target transcripts, such as CDKN1A and MYOG, leading to maintain their stabilities. Involved in myogenic differentiation by regulating MYOG levels. Binds to multiple regions in the mRNA 3'-UTR of TP63, hence inducing its destabilization. Also promotes the destabilization of the CHRM2 mRNA via its binding to a region in the coding sequence. Plays a role in the regulation of mRNA translation. Mediates repression of p53/TP53 mRNA translation through its binding to U-rich element in the 3'-UTR, hence preventing EIF4E from binding to p53/TP53 mRNA and translation initiation. Binds to a huge amount of mRNAs. Required for embryonic heart development, sarcomer and M-band formation in striated muscles. Together with RBM20, promotes the expression of short isoforms of PDLIM5/ENH in cardiomyocytes. The protein is RNA-binding protein 24 of Mus musculus (Mouse).